The following is a 579-amino-acid chain: Methionine--tRNA ligase (579 aa).

The 'HIGH' region signature appears at 14-24 (PYINGVKHLGN). Zn(2+)-binding residues include Cys146, Cys149, Cys159, and Cys162. The 'KMSKS' region signature appears at 346-350 (KFSTS). Thr349 provides a ligand contact to ATP.

Belongs to the class-I aminoacyl-tRNA synthetase family. MetG type 1 subfamily. In terms of assembly, monomer. Requires Zn(2+) as cofactor.

It is found in the cytoplasm. It carries out the reaction tRNA(Met) + L-methionine + ATP = L-methionyl-tRNA(Met) + AMP + diphosphate. In terms of biological role, is required not only for elongation of protein synthesis but also for the initiation of all mRNA translation through initiator tRNA(fMet) aminoacylation. This chain is Methionine--tRNA ligase, found in Hyphomonas neptunium (strain ATCC 15444).